The sequence spans 333 residues: tRNA N6-adenosine threonylcarbamoyltransferase (333 aa).

Residues His118 and His122 each contribute to the Fe cation site. Residues 140–144, Asp173, Gly186, and Asn274 contribute to the substrate site; that span reads VVSGG. Asp298 is a Fe cation binding site.

This sequence belongs to the KAE1 / TsaD family. The cofactor is Fe(2+).

Its subcellular location is the cytoplasm. It carries out the reaction L-threonylcarbamoyladenylate + adenosine(37) in tRNA = N(6)-L-threonylcarbamoyladenosine(37) in tRNA + AMP + H(+). Its function is as follows. Required for the formation of a threonylcarbamoyl group on adenosine at position 37 (t(6)A37) in tRNAs that read codons beginning with adenine. Is involved in the transfer of the threonylcarbamoyl moiety of threonylcarbamoyl-AMP (TC-AMP) to the N6 group of A37, together with TsaE and TsaB. TsaD likely plays a direct catalytic role in this reaction. The sequence is that of tRNA N6-adenosine threonylcarbamoyltransferase from Deinococcus geothermalis (strain DSM 11300 / CIP 105573 / AG-3a).